We begin with the raw amino-acid sequence, 498 residues long: Pentatricopeptide repeat-containing protein At2g15980 (498 aa).

7 PPR repeats span residues 244–274 (NATTFNSMMVSFYREGETEMVERIWREMEEE), 280–314 (NVYSYNVLMEAYCARGLMSEAEKVWEEMKVRGVVY), 315–349 (DIVAYNTMIGGLCSNFEVVKAKELFRDMGLKGIEC), 350–384 (TCLTYEHLVNGYCKAGDVDSGLVVYREMKRKGFEA), 385–423 (DGLTIEALVEGLCDDRDGQRVVEAADIVKDAVREAMFYP), 424–458 (SRNCYELLVKRLCEDGKMDRALNIQAEMVGKGFKP), and 459–489 (SQETYRAFIDGYGIVGDEETSALLAIEMAES).

This sequence belongs to the PPR family. P subfamily.

The chain is Pentatricopeptide repeat-containing protein At2g15980 from Arabidopsis thaliana (Mouse-ear cress).